Consider the following 538-residue polypeptide: Bifunctional purine biosynthesis protein PurH (538 aa).

The MGS-like domain occupies 8-158 (IPAPDKVEIK…KNHAYVTTLT (151 aa)).

Belongs to the PurH family.

The enzyme catalyses (6R)-10-formyltetrahydrofolate + 5-amino-1-(5-phospho-beta-D-ribosyl)imidazole-4-carboxamide = 5-formamido-1-(5-phospho-D-ribosyl)imidazole-4-carboxamide + (6S)-5,6,7,8-tetrahydrofolate. It carries out the reaction IMP + H2O = 5-formamido-1-(5-phospho-D-ribosyl)imidazole-4-carboxamide. The protein operates within purine metabolism; IMP biosynthesis via de novo pathway; 5-formamido-1-(5-phospho-D-ribosyl)imidazole-4-carboxamide from 5-amino-1-(5-phospho-D-ribosyl)imidazole-4-carboxamide (10-formyl THF route): step 1/1. It functions in the pathway purine metabolism; IMP biosynthesis via de novo pathway; IMP from 5-formamido-1-(5-phospho-D-ribosyl)imidazole-4-carboxamide: step 1/1. In Rhizobium johnstonii (strain DSM 114642 / LMG 32736 / 3841) (Rhizobium leguminosarum bv. viciae), this protein is Bifunctional purine biosynthesis protein PurH.